Here is a 266-residue protein sequence, read N- to C-terminus: 3-methyl-2-oxobutanoate hydroxymethyltransferase (266 aa).

Residues Asp45 and Asp84 each coordinate Mg(2+). Residues Asp45–Ser46, Asp84, and Lys113 each bind 3-methyl-2-oxobutanoate. Position 115 (Glu115) interacts with Mg(2+). Catalysis depends on Glu183, which acts as the Proton acceptor.

Belongs to the PanB family. In terms of assembly, homodecamer; pentamer of dimers. It depends on Mg(2+) as a cofactor.

It is found in the cytoplasm. The enzyme catalyses 3-methyl-2-oxobutanoate + (6R)-5,10-methylene-5,6,7,8-tetrahydrofolate + H2O = 2-dehydropantoate + (6S)-5,6,7,8-tetrahydrofolate. The protein operates within cofactor biosynthesis; (R)-pantothenate biosynthesis; (R)-pantoate from 3-methyl-2-oxobutanoate: step 1/2. In terms of biological role, catalyzes the reversible reaction in which hydroxymethyl group from 5,10-methylenetetrahydrofolate is transferred onto alpha-ketoisovalerate to form ketopantoate. The protein is 3-methyl-2-oxobutanoate hydroxymethyltransferase of Coxiella burnetii (strain CbuK_Q154) (Coxiella burnetii (strain Q154)).